Reading from the N-terminus, the 289-residue chain is 3-hydroxy-16-methoxy-2,3-dihydrotabersonine N-methyltransferase (289 aa).

The tract at residues 71–80 (MLDVGSGLGG) is SAM motif I. The interval 134-142 (GKFDVVFTI) is SAM motif II. Positions 161–170 (VAAPGAAIII) are SAM motif III. The short motif at 287 to 289 (KSI) is the Microbody targeting signal element.

This sequence belongs to the class I-like SAM-binding methyltransferase superfamily. gTMT family. In terms of assembly, homodimer. In terms of tissue distribution, mainly expressed in young leaves, and, to a lower extent, in mature leaves, flowers, stems and roots (at protein level).

The protein localises to the thylakoid. It is found in the peroxisome. It catalyses the reaction (3R)-3-hydroxy-16-methoxy-2,3-dihydrotabersonine + S-adenosyl-L-methionine = deacetoxyvindoline + S-adenosyl-L-homocysteine + H(+). The protein operates within alkaloid biosynthesis; vindoline biosynthesis. Inhibited by gamma-tocopherol. In terms of biological role, S-adenosyl-L-methionine-dependent N-methyltransferase that catalyzes a nitrogen methylation involved in vindoline biosynthesis. Displays a strict requirement for a 2,3-dihydro bond in the aspidosperma skeleton. Can use 2,3-dihydrotabersonine, 2,3-dihydro-3-hydroxytabersonine and 2,3,6,7-tetraydro-3-hydroxytabersonine as substrates, but not tabersonine, vincadifformine, 21-hydroxycyclolochnericine, tryptamine, norharmane, harmaline, catharanthine, norajmaline, ajmaline, serpentine, ajmalicine, yohimbine or gamma-tocopherol. Inactive with picrinine as substrate. The polypeptide is 3-hydroxy-16-methoxy-2,3-dihydrotabersonine N-methyltransferase (Catharanthus roseus (Madagascar periwinkle)).